A 653-amino-acid chain; its full sequence is Sodium-dependent phosphate transporter 2 (653 aa).

At 1 to 5 (MAIDG) the chain is on the extracellular side. Residues 6 to 26 (YLWMVILGFIIAFILAFSVGA) traverse the membrane as a helical segment. Over 27–46 (NDVANSFGTAVGSGVVTLRQ) the chain is Cytoplasmic. A helical membrane pass occupies residues 47–67 (ACILASIFETTGSVLLGAKVG). The Extracellular portion of the chain corresponds to 68–86 (ETIRKGIIDVNLYNETVET). N81 carries an N-linked (GlcNAc...) asparagine glycan. A helical transmembrane segment spans residues 87–107 (LMAGEVSAMVGSAVWQLIASF). At 108 to 109 (LR) the chain is on the cytoplasmic side. A helical transmembrane segment spans residues 110–130 (LPISGTHCIVGSTIGFSLVAI). The Extracellular portion of the chain corresponds to 131-142 (GTQGVQWMELVK). The helical transmembrane segment at 143 to 163 (IVASWFISPLLSGFMSGVLFI) threads the bilayer. Topologically, residues 164 to 190 (LIRIFILKKEDPVPNGLRALPVFYAAT) are cytoplasmic. The chain crosses the membrane as a helical span at residues 191–211 (IAINVFSIMYTGAPVLGLVLP). Residues 212 to 213 (IW) are Extracellular-facing. Residues 214 to 234 (AIALISFGVALLFALFVWLFV) form a helical membrane-spanning segment. Topologically, residues 235–483 (CPWMRRKIAG…EEKEEKDTAE (249 aa)) are cytoplasmic. A phosphoserine mark is found at S253, S256, S259, and S268. Residues 275–311 (PGAKANDDSTVPLTGSAGEPSGTSEGTSVGNHPRASY) are disordered. Residues 295–304 (SGTSEGTSVG) are compositionally biased toward polar residues. Residues S316 and S385 each carry the phosphoserine modification. The disordered stretch occupies residues 459-478 (SELTDPDQPRDDPAEEEKEE). A helical transmembrane segment spans residues 484-504 (VHLLFHFLQVLTACFGSFAHG). The Extracellular portion of the chain corresponds to 505–531 (GNDVSNAIGPLVALWLIYEQGAVLQEA). A helical membrane pass occupies residues 532–552 (VTPVWLLFYGGVGICTGLWVW). Residues 553–572 (GRRVIQTMGKDLTPITPSSG) are Cytoplasmic-facing. A helical transmembrane segment spans residues 573-587 (FTIELASAFTVVIAS). At 588 to 594 (NVGLPVS) the chain is on the extracellular side. A helical transmembrane segment spans residues 595 to 610 (TTHCKVGSVVAVGWIR). The Cytoplasmic segment spans residues 611-622 (SRKAVDWRLFRN). Residues 623–643 (IFVAWFVTVPVAGLFSAAIMA) form a helical membrane-spanning segment. Topologically, residues 644 to 653 (LLMYGILPYV) are extracellular.

The protein belongs to the inorganic phosphate transporter (PiT) (TC 2.A.20) family. In terms of assembly, homodimer.

Its subcellular location is the cell membrane. The protein localises to the apical cell membrane. The enzyme catalyses 2 Na(+)(out) + phosphate(out) = 2 Na(+)(in) + phosphate(in). Functionally, sodium-phosphate symporter which preferentially transports the monovalent form of phosphate with a stoichiometry of two sodium ions per phosphate ion. Plays a critical role in the determination of bone quality and strength by providing phosphate for bone mineralization. Required to maintain normal cerebrospinal fluid phosphate levels. Mediates phosphate-induced calcification of vascular smooth muscle cells (VCMCs) and can functionally compensate for loss of SLC20A1 in VCMCs. Its function is as follows. (Microbial infection) Functions as a retroviral receptor for feline leukemia virus subgroup B (FeLV-B). The chain is Sodium-dependent phosphate transporter 2 (SLC20A2) from Felis catus (Cat).